A 298-amino-acid polypeptide reads, in one-letter code: ATP synthase F(1) complex subunit gamma, mitochondrial (298 aa).

The N-terminal 25 residues, 1-25, are a transit peptide targeting the mitochondrion; sequence MFSRAGVAGLSAWTVQPQWIQVRNM. N6-acetyllysine is present on Lys-39. Lys-49 carries the post-translational modification N6-succinyllysine. Lys-55 bears the N6-acetyllysine mark. Lys-115 bears the N6-acetyllysine; alternate mark. Lys-115 bears the N6-succinyllysine; alternate mark. Ser-146 is modified (phosphoserine). N6-acetyllysine; alternate is present on Lys-154. Lys-154 is modified (N6-succinyllysine; alternate). At Lys-197 the chain carries N6-acetyllysine. An N6-succinyllysine modification is found at Lys-270.

This sequence belongs to the ATPase gamma chain family. As to quaternary structure, component of the ATP synthase complex composed at least of ATP5F1A/subunit alpha, ATP5F1B/subunit beta, ATP5MC1/subunit c (homooctomer), MT-ATP6/subunit a, MT-ATP8/subunit 8, ATP5ME/subunit e, ATP5MF/subunit f, ATP5MG/subunit g, ATP5MK/subunit k, ATP5MJ/subunit j, ATP5F1C/subunit gamma, ATP5F1D/subunit delta, ATP5F1E/subunit epsilon, ATP5PF/subunit F6, ATP5PB/subunit b, ATP5PD/subunit d, ATP5PO/subunit OSCP. ATP synthase complex consists of a soluble F(1) head domain (subunits alpha(3) and beta(3)) - the catalytic core - and a membrane F(0) domain - the membrane proton channel (subunits c, a, 8, e, f, g, k and j). These two domains are linked by a central stalk (subunits gamma, delta, and epsilon) rotating inside the F1 region and a stationary peripheral stalk (subunits F6, b, d, and OSCP). Interacts with FLVCR2; this interaction occurs in the absence of heme and is disrupted upon heme binding.

It localises to the mitochondrion inner membrane. Subunit gamma, of the mitochondrial membrane ATP synthase complex (F(1)F(0) ATP synthase or Complex V) that produces ATP from ADP in the presence of a proton gradient across the membrane which is generated by electron transport complexes of the respiratory chain. ATP synthase complex consist of a soluble F(1) head domain - the catalytic core - and a membrane F(1) domain - the membrane proton channel. These two domains are linked by a central stalk rotating inside the F(1) region and a stationary peripheral stalk. During catalysis, ATP synthesis in the catalytic domain of F(1) is coupled via a rotary mechanism of the central stalk subunits to proton translocation. In vivo, can only synthesize ATP although its ATP hydrolase activity can be activated artificially in vitro. With the central stalk subunit delta, is essential for the biogenesis of F(1) catalytic part of the ATP synthase complex namely in the formation of F1 assembly intermediate. This is ATP synthase F(1) complex subunit gamma, mitochondrial from Bos taurus (Bovine).